The sequence spans 451 residues: Eukaryotic translation initiation factor 3 subunit E (451 aa).

In terms of domain architecture, PCI spans 256-425 (TDLFFSPAYI…GTVIMNHPPQ (170 aa)).

Belongs to the eIF-3 subunit E family. In terms of assembly, component of the eukaryotic translation initiation factor 3 (eIF-3) complex.

Its subcellular location is the cytoplasm. In terms of biological role, component of the eukaryotic translation initiation factor 3 (eIF-3) complex, which is involved in protein synthesis of a specialized repertoire of mRNAs and, together with other initiation factors, stimulates binding of mRNA and methionyl-tRNAi to the 40S ribosome. The eIF-3 complex specifically targets and initiates translation of a subset of mRNAs involved in cell proliferation. This is Eukaryotic translation initiation factor 3 subunit E (int6) from Aspergillus oryzae (strain ATCC 42149 / RIB 40) (Yellow koji mold).